A 373-amino-acid polypeptide reads, in one-letter code: Malate dehydrogenase, mitochondrial (373 aa).

Residues 69-75 (GAAGGIG) and Asp95 each bind NAD(+). Substrate contacts are provided by Arg141 and Arg147. NAD(+) contacts are provided by residues Asn154 and 177 to 179 (ISN). Asn179 and Arg213 together coordinate substrate. The Proton acceptor role is filled by His237. Met288 contributes to the NAD(+) binding site.

This sequence belongs to the LDH/MDH superfamily. MDH type 1 family. Homodimer.

It is found in the mitochondrion matrix. The enzyme catalyses (S)-malate + NAD(+) = oxaloacetate + NADH + H(+). In Chlamydomonas reinhardtii (Chlamydomonas smithii), this protein is Malate dehydrogenase, mitochondrial.